Reading from the N-terminus, the 131-residue chain is MSMSDPIADLLTRIRNAQMVSKATVSVPSSKVKVAIAQVLKDEGYIDGFEVKSESGKTELEITLKYYAGRPVIERIERVSRPGLRVYKGCGSIPQVMNGLGVAIVTTPKGVMTDRKARATGVGGEVLCYVA.

The protein belongs to the universal ribosomal protein uS8 family. As to quaternary structure, part of the 30S ribosomal subunit. Contacts proteins S5 and S12.

Functionally, one of the primary rRNA binding proteins, it binds directly to 16S rRNA central domain where it helps coordinate assembly of the platform of the 30S subunit. The protein is Small ribosomal subunit protein uS8 of Acidovorax sp. (strain JS42).